A 606-amino-acid polypeptide reads, in one-letter code: Melanoma-associated antigen D2 (606 aa).

Residues methionine 1–arginine 204 are disordered. Serine 2 carries the N-acetylserine modification. Serine 5 bears the Phosphoserine mark. The span at serine 24 to valine 37 shows a compositional bias: polar residues. At threonine 72 the chain carries Phosphothreonine. The segment covering threonine 81–glutamine 93 has biased composition (polar residues). A compositionally biased stretch (basic and acidic residues) spans glutamate 122–aspartate 131. Positions glutamate 142–glutamate 164 are enriched in low complexity. Serine 157 bears the Phosphoserine mark. The span at lysine 171–lysine 181 shows a compositional bias: basic residues. Serine 190, serine 191, serine 194, serine 197, serine 244, and serine 247 each carry phosphoserine. Basic residues predominate over residues proline 248–alanine 260. Positions proline 248 to aspartate 275 are disordered. Phosphoserine is present on residues serine 264 and serine 265. Residues leucine 279–alanine 478 enclose the MAGE domain. The interval glycine 534–alanine 563 is disordered.

In terms of assembly, interacts with GNAS. May interact with DNAJB1. Widely expressed. In the developing and adult kidney, expressed in the thick ascending limb of the loop of Henle and the distal convoluted tubules outside the loop.

Functionally, regulates the expression, localization to the plasma membrane and function of the sodium chloride cotransporters SLC12A1 and SLC12A3, two key components of salt reabsorption in the distal renal tubule. The chain is Melanoma-associated antigen D2 (MAGED2) from Homo sapiens (Human).